The chain runs to 248 residues: Probable transcriptional regulatory protein Psyr_1407 (248 aa).

The protein belongs to the TACO1 family.

The protein resides in the cytoplasm. The sequence is that of Probable transcriptional regulatory protein Psyr_1407 from Pseudomonas syringae pv. syringae (strain B728a).